The chain runs to 317 residues: Small ribosomal subunit protein RACK1 (317 aa).

WD repeat units lie at residues 13-44 (GHSGWVTQIATTPQFPDMILSASRDKTIIMWK), 61-91 (GHSHFVSDVVISSDGQFALSGSWDGTLRLWD), 103-133 (GHTKDVLSVAFSADNRQIVSGSRDKTIKLWN), 146-178 (SHTEWVSCVRFSPNSSNPIIVSCGWDKMVKVWN), 190-220 (GHTGYLNTVTVSPDGSLCASGGKDGQAMLWD), 231-260 (DGGDTINALCFSPNRYWLCAATGPSIKIWD), and 281-311 (AEPPQCTSLAWSADGQTLFAGYTDNLIRVWQ).

The protein belongs to the WD repeat G protein beta family. Ribosomal protein RACK1 subfamily.

It is found in the cytoplasm. Involved in the recruitment, assembly and/or regulation of a variety of signaling molecules. Interacts with a wide variety of proteins and plays a role in many cellular processes. Required for VANGL2 membrane localization, inhibits Wnt signaling and regulates cellular polarization and oriented cell division during gastrulation. The chain is Small ribosomal subunit protein RACK1 (gnb2l1) from Danio rerio (Zebrafish).